The following is a 245-amino-acid chain: Dehydrogenase/reductase SDR family member 6 (245 aa).

NAD(+) is bound by residues 16-18, Asp-37, and Asp-58; that span reads QGI. Position 144 (Arg-144) interacts with substrate. Tyr-147 (proton acceptor) is an active-site residue. NAD(+) contacts are provided by residues Lys-151 and 180–184; that span reads VDTPS. Positions 188 and 205 each coordinate substrate.

Belongs to the short-chain dehydrogenases/reductases (SDR) family. In terms of assembly, homotetramer.

The protein localises to the cytoplasm. The enzyme catalyses cis-4-hydroxy-L-proline + NAD(+) = 4-oxo-L-proline + NADH + H(+). It catalyses the reaction (R)-3-hydroxybutanoate + NAD(+) = acetoacetate + NADH + H(+). It participates in amino-acid metabolism. The protein operates within siderophore biosynthesis. In terms of biological role, NAD(H)-dependent dehydrogenase/reductase with a preference for cyclic substrates. Catalyzes stereoselective conversion of 4-oxo-L-proline to cis-4-hydroxy-L-proline, likely a detoxification mechanism for ketoprolines. Mediates the formation of 2,5-dihydroxybenzoate (2,5-DHBA), a siderophore that chelates free cytoplasmic iron, thereby regulating iron transport and homeostasis while protecting cells against free radical-induced oxidative stress. The iron-siderophore complex is imported into mitochondria, providing an iron source for mitochondrial metabolic processes in particular heme synthesis. May act as a 3-hydroxybutyrate dehydrogenase. This is Dehydrogenase/reductase SDR family member 6 (bdh2) from Danio rerio (Zebrafish).